The chain runs to 90 residues: DNA-binding protein HU-beta (90 aa).

Belongs to the bacterial histone-like protein family. As to quaternary structure, heterodimer of an alpha and a beta chain.

Its function is as follows. Histone-like DNA-binding protein which is capable of wrapping DNA to stabilize it, and thus to prevent its denaturation under extreme environmental conditions. In Serratia marcescens, this protein is DNA-binding protein HU-beta (hupB).